The sequence spans 710 residues: Low-temperature-induced 78 kDa protein (710 aa).

Disordered regions lie at residues 1–198 (MDQT…LDGQ), 225–269 (YQSK…RDLS), and 305–507 (GFGD…STYT). The span at 14 to 25 (QHPEEVEHHENG) shows a compositional bias: basic and acidic residues. Residues 29–41 (MFRKVKARAKKFK) show a composition bias toward basic residues. Positions 49 to 58 (QSNEHEQDHD) are enriched in basic and acidic residues. Acidic residues predominate over residues 59 to 73 (LVEEDDDDDELEPEV). The span at 138 to 168 (SDKEEKRDVPIHHPLSELSDREESRETHHES) shows a compositional bias: basic and acidic residues. Residues 169 to 187 (LNTPVSLLSGTEDVTSTFA) are compositionally biased toward polar residues. Repeat copies occupy residues 303-316 (PVGFGDESGAELEK), 317-331 (DFPTRSHDFDMKTET), 336-350 (NSPSRSHEFDLKTES), 357-370 (PMGFGSESGAELEK), and 398-412 (NFPVRSHELDLKNES). The segment at 303–370 (PVGFGDESGA…GSESGAELEK (68 aa)) is 2 X 14 AA repeats of P-[MV]-G-F-G-[DS]-E-S-G-A-E-L-E-K. Basic and acidic residues-rich tracts occupy residues 313–331 (ELEKDFPTRSHDFDMKTET), 340–352 (RSHEFDLKTESGN), 367–380 (ELEKEFDQKNDSGR), 402–418 (RSHELDLKNESDIDKDV), 442–466 (EDKFPARSDDVEVETELGRDPKTET), and 475–487 (SHPKERDEFKESR). Residues 317 to 412 (DFPTRSHDFD…SHELDLKNES (96 aa)) are 3 X 15 AA repeats of [DN]-[FS]-P-[STV]-R-S-H-[DE]-[FL]-D-[LM]-K-[NT]-E-[ST]. 3 consecutive repeat copies span residues 510 to 514 (FASML), 532 to 536 (VDEKL), and 550 to 554 (VTTKL). The 5 X 5 AA repeats of [FV]-[ADT]-[EST]-[KM]-L stretch occupies residues 510 to 600 (FASMLGYSGE…AFSDMVAEKL (91 aa)). Positions 537 to 577 (TPVNEKDQETESAVTTKLPISGGGSGVEEQRGEDKSVSGRD) are disordered. Residues 564–577 (EEQRGEDKSVSGRD) show a composition bias toward basic and acidic residues. Tandem repeats lie at residues 579–583 (VAEKL) and 596–600 (VAEKL). A disordered region spans residues 601-710 (QIGGEEEKKE…STVVPVQKEL (110 aa)). Residues 605–626 (EEEKKETTTKEVEKISTEKAAS) show a composition bias toward basic and acidic residues. Ser-626 carries the phosphoserine modification. Residues 638–654 (GGGGMVGRIKGWFGGGA) show a composition bias toward gly residues. 2 repeat units span residues 648–670 (GWFGGGATDEVKPESPHSVEEAP) and 674–696 (GWFGGGATEEVKPKSPHSVEESP). The segment at 648–696 (GWFGGGATDEVKPESPHSVEEAPKSSGWFGGGATEEVKPKSPHSVEESP) is 2 X 23 AA repeats. 2 stretches are compositionally biased toward basic and acidic residues: residues 656–670 (DEVKPESPHSVEEAP) and 682–693 (EEVKPKSPHSVE).

This sequence belongs to the LTI78/LTI65 family. As to expression, accumulates rapidly in leaves, stems, roots, flower petals, filaments, and sepals during cold-acclimation.

The protein localises to the cytoplasm. In terms of biological role, involved in responses to abiotic stresses. Regulates probably root elongation in cold conditions. The chain is Low-temperature-induced 78 kDa protein from Arabidopsis thaliana (Mouse-ear cress).